A 375-amino-acid polypeptide reads, in one-letter code: Succinyl-diaminopimelate desuccinylase (375 aa).

Position 66 (histidine 66) interacts with Zn(2+). Aspartate 68 is an active-site residue. Residue aspartate 99 coordinates Zn(2+). Residue glutamate 133 is the Proton acceptor of the active site. The Zn(2+) site is built by glutamate 134, glutamate 162, and histidine 348.

It belongs to the peptidase M20A family. DapE subfamily. In terms of assembly, homodimer. Requires Zn(2+) as cofactor. The cofactor is Co(2+).

It catalyses the reaction N-succinyl-(2S,6S)-2,6-diaminopimelate + H2O = (2S,6S)-2,6-diaminopimelate + succinate. Its pathway is amino-acid biosynthesis; L-lysine biosynthesis via DAP pathway; LL-2,6-diaminopimelate from (S)-tetrahydrodipicolinate (succinylase route): step 3/3. Functionally, catalyzes the hydrolysis of N-succinyl-L,L-diaminopimelic acid (SDAP), forming succinate and LL-2,6-diaminopimelate (DAP), an intermediate involved in the bacterial biosynthesis of lysine and meso-diaminopimelic acid, an essential component of bacterial cell walls. The polypeptide is Succinyl-diaminopimelate desuccinylase (Salmonella agona (strain SL483)).